The chain runs to 260 residues: Snake venom serine protease KN5 (260 aa).

A signal peptide spans 1–18; that stretch reads MVLIRVLANLLILQLSYA. The propeptide occupies 19–24; it reads QKSSEL. The region spanning 25–251 is the Peptidase S1 domain; sequence VIGGDECNIN…HLDWIQSIIA (227 aa). Disulfide bonds link Cys31–Cys165, Cys100–Cys258, Cys144–Cys212, Cys176–Cys191, and Cys202–Cys227. His67 (charge relay system) is an active-site residue. An N-linked (GlcNAc...) asparagine glycan is attached at Asn105. Asp112 (charge relay system) is an active-site residue. 2 N-linked (GlcNAc...) asparagine glycosylation sites follow: Asn124 and Asn172. Ser206 (charge relay system) is an active-site residue. N-linked (GlcNAc...) asparagine glycans are attached at residues Asn213 and Asn255.

This sequence belongs to the peptidase S1 family. Snake venom subfamily. As to quaternary structure, monomer. Expressed by the venom gland.

It localises to the secreted. Snake venom serine protease that may act in the hemostasis system of the prey. This Trimeresurus stejnegeri (Chinese green tree viper) protein is Snake venom serine protease KN5.